We begin with the raw amino-acid sequence, 405 residues long: DNA primase DnaG (405 aa).

The Toprim domain occupies 172 to 248 (DSIIVVEGRA…HIDYIARAPP (77 aa)). 3 residues coordinate Mg(2+): Glu-178, Asp-222, and Asp-224. The segment at 279–302 (AAGEKTESQMSPQQPQLTQTQPTT) is disordered. Residues 290 to 302 (PQQPQLTQTQPTT) show a composition bias toward low complexity.

This sequence belongs to the archaeal DnaG primase family. In terms of assembly, forms a ternary complex with MCM helicase and DNA. Component of the archaeal exosome complex. Mg(2+) serves as cofactor.

It carries out the reaction ssDNA + n NTP = ssDNA/pppN(pN)n-1 hybrid + (n-1) diphosphate.. Its function is as follows. RNA polymerase that catalyzes the synthesis of short RNA molecules used as primers for DNA polymerase during DNA replication. Also part of the exosome, which is a complex involved in RNA degradation. Acts as a poly(A)-binding protein that enhances the interaction between heteromeric, adenine-rich transcripts and the exosome. The sequence is that of DNA primase DnaG from Pyrobaculum islandicum (strain DSM 4184 / JCM 9189 / GEO3).